Here is a 117-residue protein sequence, read N- to C-terminus: MSWRGRSTYYWPRPRRYVQPPEMIGPMRPEQFSDEVEPATPEEGEPATQRQDPAAAQEGEDEGASAGQGPKPEAHSQEQGHPQTGCECEDGPDGQEMDPPNPEEVKTPEEGEKQSQC.

The interval Met-1 to Cys-117 is disordered. Acidic residues-rich tracts occupy residues Phe-32 to Glu-45 and Glu-87 to Glu-96. Positions Glu-103–Cys-117 are enriched in basic and acidic residues.

This sequence belongs to the GAGE family. Forms tetramers.

In Homo sapiens (Human), this protein is G antigen 12I (GAGE12I).